Consider the following 336-residue polypeptide: Holliday junction branch migration complex subunit RuvB (336 aa).

The tract at residues Met-4–Tyr-185 is large ATPase domain (RuvB-L). Residues Leu-24, Arg-25, Gly-66, Lys-69, Thr-70, Thr-71, Glu-132–Phe-134, Arg-175, Tyr-185, and Arg-222 each bind ATP. Thr-70 is a Mg(2+) binding site. Residues Thr-186–Gln-256 form a small ATPAse domain (RuvB-S) region. A head domain (RuvB-H) region spans residues Lys-259–Val-336. DNA contacts are provided by Arg-314 and Arg-319.

Belongs to the RuvB family. Homohexamer. Forms an RuvA(8)-RuvB(12)-Holliday junction (HJ) complex. HJ DNA is sandwiched between 2 RuvA tetramers; dsDNA enters through RuvA and exits via RuvB. An RuvB hexamer assembles on each DNA strand where it exits the tetramer. Each RuvB hexamer is contacted by two RuvA subunits (via domain III) on 2 adjacent RuvB subunits; this complex drives branch migration. In the full resolvosome a probable DNA-RuvA(4)-RuvB(12)-RuvC(2) complex forms which resolves the HJ.

It is found in the cytoplasm. It catalyses the reaction ATP + H2O = ADP + phosphate + H(+). In terms of biological role, the RuvA-RuvB-RuvC complex processes Holliday junction (HJ) DNA during genetic recombination and DNA repair, while the RuvA-RuvB complex plays an important role in the rescue of blocked DNA replication forks via replication fork reversal (RFR). RuvA specifically binds to HJ cruciform DNA, conferring on it an open structure. The RuvB hexamer acts as an ATP-dependent pump, pulling dsDNA into and through the RuvAB complex. RuvB forms 2 homohexamers on either side of HJ DNA bound by 1 or 2 RuvA tetramers; 4 subunits per hexamer contact DNA at a time. Coordinated motions by a converter formed by DNA-disengaged RuvB subunits stimulates ATP hydrolysis and nucleotide exchange. Immobilization of the converter enables RuvB to convert the ATP-contained energy into a lever motion, pulling 2 nucleotides of DNA out of the RuvA tetramer per ATP hydrolyzed, thus driving DNA branch migration. The RuvB motors rotate together with the DNA substrate, which together with the progressing nucleotide cycle form the mechanistic basis for DNA recombination by continuous HJ branch migration. Branch migration allows RuvC to scan DNA until it finds its consensus sequence, where it cleaves and resolves cruciform DNA. This is Holliday junction branch migration complex subunit RuvB from Bacillus cereus (strain ZK / E33L).